The chain runs to 24 residues: RuBisCO large subunit-binding protein subunit beta, chloroplastic (24 aa).

Belongs to the chaperonin (HSP60) family. Oligomer of probably six alpha and six beta subunits.

The protein localises to the plastid. Its subcellular location is the chloroplast. This protein binds RuBisCO small and large subunits and is implicated in the assembly of the enzyme oligomer. The chain is RuBisCO large subunit-binding protein subunit beta, chloroplastic from Populus euphratica (Euphrates poplar).